The sequence spans 460 residues: Lipase member H (460 aa).

An N-terminal signal peptide occupies residues 1 to 24 (MLLRFYFNGLLFVGCLLSWGRSDT). N-linked (GlcNAc...) asparagine glycans are attached at residues Asn-67 and Asn-75. Residue Ser-163 is the Nucleophile of the active site. Residue Asn-177 is glycosylated (N-linked (GlcNAc...) asparagine). Residue Asp-187 is the Charge relay system of the active site. Cys-242 and Cys-255 are oxidised to a cystine. The active-site Charge relay system is the His-257. 2 disulfides stabilise this stretch: Cys-279–Cys-290 and Cys-293–Cys-301. The N-linked (GlcNAc...) asparagine glycan is linked to Asn-289. The N-linked (GlcNAc...) asparagine glycan is linked to Asn-366. Cys-436 and Cys-455 form a disulfide bridge.

Belongs to the AB hydrolase superfamily. Lipase family.

It localises to the secreted. It is found in the cell membrane. It catalyses the reaction 1-hexadecanoyl-2-(9Z-octadecenoyl)-sn-glycero-3-phosphate + H2O = 2-(9Z-octadecenoyl)-sn-glycero-3-phosphate + hexadecanoate + H(+). Its function is as follows. Hydrolyzes specifically phosphatidic acid (PA) to produce 2-acyl lysophosphatidic acid (LPA; a potent bioactive lipid mediator) and fatty acid. Does not hydrolyze other phospholipids, like phosphatidylserine (PS), phosphatidylcholine (PC) and phosphatidylethanolamine (PE) or triacylglycerol (TG). This chain is Lipase member H (liph), found in Xenopus tropicalis (Western clawed frog).